A 1026-amino-acid chain; its full sequence is Multidrug resistance protein MdtC (1026 aa).

11 consecutive transmembrane segments (helical) span residues 16–36, 333–353, 360–380, 387–407, 435–455, 459–479, 528–548, 853–873, 897–917, 953–973, and 984–1004; these read LLALAITLVGLLGLRLLPVAP, EVEQSLAIAIALVILVVFLFL, LIPAVTVPVSLIGTCAAIYLC, LSLMALTIASGFVVDDAIVVL, VFSISLSLAAVFIPLLFMGGI, LFHEFAITLSASIAISLLIAL, WVLLTLLAVIGLNIWLYISIP, LLLILAAIATVYIVLGILYES, LFNAPFSLIALIGIMLLIGLV, PILMTTLAALFGALPLAFSYG, and ITIVGGLLVSQILTLYTTPVV.

The protein belongs to the resistance-nodulation-cell division (RND) (TC 2.A.6) family. MdtC subfamily. In terms of assembly, part of a tripartite efflux system composed of MdtA, MdtB and MdtC. MdtC forms a heteromultimer with MdtB.

The protein localises to the cell inner membrane. This chain is Multidrug resistance protein MdtC, found in Edwardsiella ictaluri (strain 93-146).